Reading from the N-terminus, the 131-residue chain is Ribosome-binding factor A (131 aa).

This sequence belongs to the RbfA family. Monomer. Binds 30S ribosomal subunits, but not 50S ribosomal subunits or 70S ribosomes.

It localises to the cytoplasm. Its function is as follows. One of several proteins that assist in the late maturation steps of the functional core of the 30S ribosomal subunit. Associates with free 30S ribosomal subunits (but not with 30S subunits that are part of 70S ribosomes or polysomes). Required for efficient processing of 16S rRNA. May interact with the 5'-terminal helix region of 16S rRNA. This is Ribosome-binding factor A from Pseudomonas fluorescens (strain SBW25).